The chain runs to 242 residues: Agamous-like MADS-box protein MADS4 (242 aa).

One can recognise an MADS-box domain in the interval 1–61 (MGRGRVELKR…GKLYEFCSSS (61 aa)). The 97-residue stretch at 89-185 (ELSSQQEYLK…GTQVNQLQWN (97 aa)) folds into the K-box domain.

In terms of tissue distribution, expressed in flowers and seeds.

It is found in the nucleus. Its function is as follows. Probable transcription factor involved in flower development. This chain is Agamous-like MADS-box protein MADS4, found in Vitis vinifera (Grape).